The sequence spans 456 residues: Bifunctional protein GlmU (456 aa).

A pyrophosphorylase region spans residues 1 to 229; it reads MTKKALSAVI…VMEVEGANNR (229 aa). Residues 11 to 14, Lys25, Gln76, 81 to 82, 103 to 105, Gly140, Glu154, Asn169, and Asn227 each bind UDP-N-acetyl-alpha-D-glucosamine; these read LAAG, GT, and YGD. A Mg(2+)-binding site is contributed by Asp105. Mg(2+) is bound at residue Asn227. A linker region spans residues 230–250; sequence LQLAALERYFQNKQASKLLLE. Positions 251-456 are N-acetyltransferase; the sequence is GVMIYDPARF…QGWQRPIKKK (206 aa). UDP-N-acetyl-alpha-D-glucosamine-binding residues include Arg333 and Lys351. The active-site Proton acceptor is His363. Tyr366 and Asn377 together coordinate UDP-N-acetyl-alpha-D-glucosamine. Acetyl-CoA contacts are provided by residues Ala380, 386 to 387, Ser405, Ala423, and Arg440; that span reads NY.

It in the N-terminal section; belongs to the N-acetylglucosamine-1-phosphate uridyltransferase family. In the C-terminal section; belongs to the transferase hexapeptide repeat family. As to quaternary structure, homotrimer. Mg(2+) is required as a cofactor.

The protein resides in the cytoplasm. It carries out the reaction alpha-D-glucosamine 1-phosphate + acetyl-CoA = N-acetyl-alpha-D-glucosamine 1-phosphate + CoA + H(+). The enzyme catalyses N-acetyl-alpha-D-glucosamine 1-phosphate + UTP + H(+) = UDP-N-acetyl-alpha-D-glucosamine + diphosphate. The protein operates within nucleotide-sugar biosynthesis; UDP-N-acetyl-alpha-D-glucosamine biosynthesis; N-acetyl-alpha-D-glucosamine 1-phosphate from alpha-D-glucosamine 6-phosphate (route II): step 2/2. Its pathway is nucleotide-sugar biosynthesis; UDP-N-acetyl-alpha-D-glucosamine biosynthesis; UDP-N-acetyl-alpha-D-glucosamine from N-acetyl-alpha-D-glucosamine 1-phosphate: step 1/1. It participates in bacterial outer membrane biogenesis; LPS lipid A biosynthesis. Its function is as follows. Catalyzes the last two sequential reactions in the de novo biosynthetic pathway for UDP-N-acetylglucosamine (UDP-GlcNAc). The C-terminal domain catalyzes the transfer of acetyl group from acetyl coenzyme A to glucosamine-1-phosphate (GlcN-1-P) to produce N-acetylglucosamine-1-phosphate (GlcNAc-1-P), which is converted into UDP-GlcNAc by the transfer of uridine 5-monophosphate (from uridine 5-triphosphate), a reaction catalyzed by the N-terminal domain. The chain is Bifunctional protein GlmU from Haemophilus influenzae (strain ATCC 51907 / DSM 11121 / KW20 / Rd).